The chain runs to 350 residues: Ketol-acid reductoisomerase (NADP(+)) (350 aa).

The region spanning 4–187 (VSITTDYSRM…GGARANIIKT (184 aa)) is the KARI N-terminal Rossmann domain. NADP(+)-binding positions include 30–33 (YGSQ), Arg-53, Thr-58, and 88–91 (DMVQ). The active site involves His-113. Gly-139 contacts NADP(+). The region spanning 188 to 333 (TFKEETETDL…KQLRAKMVWL (146 aa)) is the KARI C-terminal knotted domain. Mg(2+) contacts are provided by Asp-196, Glu-200, Glu-232, and Glu-236. Ser-257 contributes to the substrate binding site.

This sequence belongs to the ketol-acid reductoisomerase family. It depends on Mg(2+) as a cofactor.

It catalyses the reaction (2R)-2,3-dihydroxy-3-methylbutanoate + NADP(+) = (2S)-2-acetolactate + NADPH + H(+). It carries out the reaction (2R,3R)-2,3-dihydroxy-3-methylpentanoate + NADP(+) = (S)-2-ethyl-2-hydroxy-3-oxobutanoate + NADPH + H(+). Its pathway is amino-acid biosynthesis; L-isoleucine biosynthesis; L-isoleucine from 2-oxobutanoate: step 2/4. It participates in amino-acid biosynthesis; L-valine biosynthesis; L-valine from pyruvate: step 2/4. Functionally, involved in the biosynthesis of branched-chain amino acids (BCAA). Catalyzes an alkyl-migration followed by a ketol-acid reduction of (S)-2-acetolactate (S2AL) to yield (R)-2,3-dihydroxy-isovalerate. In the isomerase reaction, S2AL is rearranged via a Mg-dependent methyl migration to produce 3-hydroxy-3-methyl-2-ketobutyrate (HMKB). In the reductase reaction, this 2-ketoacid undergoes a metal-dependent reduction by NADPH to yield (R)-2,3-dihydroxy-isovalerate. The protein is Ketol-acid reductoisomerase (NADP(+)) of Xylella fastidiosa (strain Temecula1 / ATCC 700964).